Here is a 142-residue protein sequence, read N- to C-terminus: ATP synthase epsilon chain (142 aa).

It belongs to the ATPase epsilon chain family. As to quaternary structure, F-type ATPases have 2 components, CF(1) - the catalytic core - and CF(0) - the membrane proton channel. CF(1) has five subunits: alpha(3), beta(3), gamma(1), delta(1), epsilon(1). CF(0) has three main subunits: a, b and c.

The protein resides in the cell inner membrane. Functionally, produces ATP from ADP in the presence of a proton gradient across the membrane. This is ATP synthase epsilon chain from Shewanella halifaxensis (strain HAW-EB4).